The following is a 629-amino-acid chain: Polyadenylate-binding protein 2 (629 aa).

Positions 1 to 12 (MAQVQLQGQTPN) are enriched in polar residues. The segment at 1-25 (MAQVQLQGQTPNGSTAAVTSAPATS) is disordered. The span at 13–25 (GSTAAVTSAPATS) shows a compositional bias: low complexity. 4 consecutive RRM domains span residues 36–114 (TSLY…YSHR), 124–201 (GNIF…PFLR), 215–292 (TNVY…RAQK), and 318–395 (SNLY…IAQR). The interval 480 to 507 (PQQQRPGGGRRPGGIQHSQQQNPMMQQQ) is disordered. A compositionally biased stretch (low complexity) spans 492–507 (GGIQHSQQQNPMMQQQ). The PABC domain occupies 539–616 (TIGALASNLS…AMDVLRSVAA (78 aa)).

The protein belongs to the polyadenylate-binding protein type-1 family. Interacts with eIF-iso4G. Interacts with ERD15/CID1 and CID7. Interacts with Turnip mosaic virus (TuMV) VPg-Pro and RNA-dependent RNA polymerase (RdRp). Expressed in all organs (at the protein level) but under distinct spatial and temporal regulation within each organ.

Its subcellular location is the cytoplasm. The protein localises to the nucleus. Binds the poly(A) tail of mRNA. Appears to be an important mediator of the multiple roles of the poly(A) tail in mRNA biogenesis, stability and translation. In the cytoplasm, affects both translation and mRNA decay. Stimulates translation by interaction with translation initiation factor eIF4G, a subunit of the cap-binding complex eIF4F, bringing the 5'- and 3'-ends of the mRNA in proximity. The formation of this circular mRNP structure appears to be critical for the synergistic effects of the cap and the poly(A) tail in facilitating translation initiation, recycling of ribosomes, and mRNA stability. During infection with potyvirus TuMV, acts as a potential integral component of the viral replicase complex that could play an important role in the regulation of potyviral RNA-dependent RNA polymerase (RdRp). Binds to uridylated mRNAs and determines the size of uridine extensions. Limits uridine extension by URT1, likely by binding to the oligo(A) tail and preventing URT1 access. The polypeptide is Polyadenylate-binding protein 2 (PAB2) (Arabidopsis thaliana (Mouse-ear cress)).